Reading from the N-terminus, the 550-residue chain is Hydroxylamine reductase (550 aa).

The [2Fe-2S] cluster site is built by C3, C6, C18, and C25. Positions 249, 273, 317, 405, 433, 458, 492, and 494 each coordinate hybrid [4Fe-2O-2S] cluster. C405 is subject to Cysteine persulfide.

The protein belongs to the HCP family. [2Fe-2S] cluster is required as a cofactor. It depends on hybrid [4Fe-2O-2S] cluster as a cofactor.

The protein localises to the cytoplasm. It carries out the reaction A + NH4(+) + H2O = hydroxylamine + AH2 + H(+). Functionally, catalyzes the reduction of hydroxylamine to form NH(3) and H(2)O. In Salmonella agona (strain SL483), this protein is Hydroxylamine reductase.